The primary structure comprises 575 residues: Golgi-associated kinase 1A (575 aa).

An N-terminal signal peptide occupies residues 1–29 (MASWLRRKLRGKRRPVIAFCLLMILSAMA). Residues 30-119 (VTRFPPQRPS…GDLRHPGRVR (90 aa)) constitute a propeptide, removed in mature form. An O-glycosylated at one site region spans residues 53–58 (TGAPAT). Residues 143–153 (VGDPGTKDLGH) show a composition bias toward basic and acidic residues. Residues 143–162 (VGDPGTKDLGHPQHGSPIQE) are disordered. A propeptide spans 437 to 575 (RYCCGFEPEP…NLTLFRDEDP (139 aa)) (removed in mature form). N566 carries N-linked (GlcNAc...) asparagine glycosylation.

Belongs to the GASK family. Post-translationally, O-glycosylated with core 1 or possibly core 8 glycans. Proteolytically cleaved. Cleaved at Arg-120 and Arg-437 leading to a processed mature product of 35 kDa. The cleavage takes place in the Golgi apparatus. As to expression, expressed in skin, lung and colon (at protein level).

It is found in the secreted. The protein resides in the endoplasmic reticulum. The protein localises to the golgi apparatus. It localises to the membrane. Its subcellular location is the caveola. This is Golgi-associated kinase 1A from Homo sapiens (Human).